A 162-amino-acid polypeptide reads, in one-letter code: SsrA-binding protein (162 aa).

A compositionally biased stretch (basic and acidic residues) spans 137–154 (HDKREDTKAREWDREKAR). A disordered region spans residues 137 to 162 (HDKREDTKAREWDREKARIMKNKHRG).

It belongs to the SmpB family.

The protein resides in the cytoplasm. Functionally, required for rescue of stalled ribosomes mediated by trans-translation. Binds to transfer-messenger RNA (tmRNA), required for stable association of tmRNA with ribosomes. tmRNA and SmpB together mimic tRNA shape, replacing the anticodon stem-loop with SmpB. tmRNA is encoded by the ssrA gene; the 2 termini fold to resemble tRNA(Ala) and it encodes a 'tag peptide', a short internal open reading frame. During trans-translation Ala-aminoacylated tmRNA acts like a tRNA, entering the A-site of stalled ribosomes, displacing the stalled mRNA. The ribosome then switches to translate the ORF on the tmRNA; the nascent peptide is terminated with the 'tag peptide' encoded by the tmRNA and targeted for degradation. The ribosome is freed to recommence translation, which seems to be the essential function of trans-translation. This Aeromonas salmonicida (strain A449) protein is SsrA-binding protein.